The chain runs to 1216 residues: FK506-binding protein 15 (1216 aa).

Met-1 bears the N-acetylmethionine mark. Phosphoserine is present on residues Ser-14 and Ser-23. Residues 41 to 68 (YTAPKQPKKGQGTAAGNQTAPKPAPATT) are disordered. A compositionally biased stretch (low complexity) spans 59–68 (TAPKPAPATT). Residues 71–168 (SSVLFATAVH…AVSFNKQVCV (98 aa)) form an important for function in growth cone organization region. N6-acetyllysine is present on Lys-91. A PPIase FKBP-type domain is found at 196-289 (GDSLEVAYTG…VFEVEVRRVK (94 aa)). Residues 292–357 (RDSGSDGHSV…QLTVNSNPDT (66 aa)) are disordered. Low complexity predominate over residues 303–322 (SRDSAAPSPIPASDSLSADP). Phosphoserine is present on residues Ser-306, Ser-310, Ser-342, Ser-344, and Ser-617. Residues 340–356 (SKSNSLSEQLTVNSNPD) are compositionally biased toward polar residues. Coiled coils occupy residues 519-790 (MAVN…AAAE) and 820-865 (QQYR…RLEK). A disordered region spans residues 927–1216 (HQEEEEEEEE…DDDDDIGWLG (290 aa)). Positions 929–940 (EEEEEEEEEEEE) are enriched in acidic residues. A Phosphoserine modification is found at Ser-948. Over residues 954 to 964 (PATPGMPPAPP) the composition is skewed to pro residues. Residues 983 to 994 (TTPLPLQALPTP) are compositionally biased toward low complexity. At Ser-1018 the chain carries Phosphoserine. Residues 1036–1045 (TSIPPKPPGP) show a composition bias toward pro residues. Residues Ser-1050 and Ser-1091 each carry the phosphoserine modification. Position 1093 is a phosphothreonine (Thr-1093). 5 positions are modified to phosphoserine: Ser-1108, Ser-1153, Ser-1157, Ser-1159, and Ser-1190. The residue at position 1198 (Thr-1198) is a Phosphothreonine. The span at 1202–1216 (GDDDDDDDDDIGWLG) shows a compositional bias: acidic residues.

This sequence belongs to the FKBP-type PPIase family. Interacts with WIP and actin. Interacts with TBC1D23. In terms of tissue distribution, expressed in brain, with highest levels in the granular cell layer of cerebellum and in the granule cell layer of dentate gyrus.

It is found in the cytoplasm. The protein localises to the cell projection. The protein resides in the axon. It localises to the early endosome. Functionally, involved in the transport of early endosomes at the level of transition between microfilament-based and microtubule-based movement. May be involved in the cytoskeletal organization of neuronal growth cones. Seems to be inactive as a PPIase. The protein is FK506-binding protein 15 (Fkbp15) of Mus musculus (Mouse).